Consider the following 583-residue polypeptide: Pre-mRNA-processing protein PRP40 (583 aa).

2 WW domains span residues M1–E31 and E42–F72. FF domains follow at residues K132 to N188, T201 to T257, Q262 to I332, R354 to E413, Q427 to N488, and R491 to E552. T576 carries the phosphothreonine modification.

It belongs to the PRPF40 family. As to quaternary structure, interacts with CRM1, MSL5, PRP8, and the RNA polymerase II largest subunit (RPB1). MSL5, MUD2 and PRP40 interact to form the commitment complex 2 (CC2), a precursor of mature spliceosomes.

Its subcellular location is the nucleus. In terms of biological role, required for pre-spliceosome formation, which is the first step of pre-mRNA splicing. This protein is associated with snRNP U1. Two commitment complexes, CC1 and CC2, have been defined in yeast. CC1 is a basal complex dependent only on the 5' splice site. CC2 is a complex of lower mobility and is dependent on a branchpoint as well as a 5' splice site region. This protein is involved in CC2 formation where it binds to the branchpoint binding protein MSL5, bridging the U1 snRNP-associated 5' splice site and the MSL5-associated branch point 3' intron splice site. The polypeptide is Pre-mRNA-processing protein PRP40 (PRP40) (Saccharomyces cerevisiae (strain ATCC 204508 / S288c) (Baker's yeast)).